We begin with the raw amino-acid sequence, 61 residues long: Arabinogalactan protein 15 (61 aa).

The signal sequence occupies residues 1-22; that stretch reads MAISKASIVVLMMVIISVVASA. At Q23 the chain carries Pyrrolidone carboxylic acid. Residues P27, P29, and P31 each carry the 4-hydroxyproline modification. O-linked (Ara...) hydroxyproline glycosylation is found at P27, P29, and P31. A lipid anchor (GPI-anchor amidated serine) is attached at S35. The propeptide at 36 to 61 is removed in mature form; that stretch reads SAISASFVSAGVAAVAALVFGSALRI.

Belongs to the AG-peptide AGP family. In terms of processing, contains 4-hydroxyproline; hydroxylated on Pro-27, Pro-29 and Pro-31. O-glycosylated on hydroxyprolines; noncontiguous hydroxylproline residues are glycosylated with arabinogalactan. As to expression, expressed in reproductive tissues. Expressed in chalaza, funiculus, stigma, septum, style, integument and transmitting tract.

It localises to the cell membrane. Functionally, proteoglycan that seems to be implicated in diverse developmental roles such as differentiation, cell-cell recognition, embryogenesis and programmed cell death. This chain is Arabinogalactan protein 15, found in Arabidopsis thaliana (Mouse-ear cress).